A 525-amino-acid polypeptide reads, in one-letter code: Protein disulfide-isomerase A2 (525 aa).

An N-terminal signal peptide occupies residues 1 to 21 (MSCQLLPVLLLLLLRASCPWG). The region spanning 27–152 (RSPSEEPPEE…IAEWLRRRVG (126 aa)) is the Thioredoxin 1 domain. Catalysis depends on nucleophile residues C71 and C74. C71 and C74 form a disulfide bridge. N-linked (GlcNAc...) asparagine glycans are attached at residues N127 and N284. Residues 367 to 496 (VLNGQVKPYL…FSKFLDNGGV (130 aa)) form the Thioredoxin 2 domain. Active-site nucleophile residues include C418 and C421. C418 and C421 are disulfide-bonded. Residues 498 to 525 (PTEEPLEEPAAPFPEPPANSTMGSKEEL) are disordered. N516 is a glycosylation site (N-linked (GlcNAc...) asparagine). Over residues 516–525 (NSTMGSKEEL) the composition is skewed to polar residues. A Prevents secretion from ER motif is present at residues 522-525 (KEEL).

It belongs to the protein disulfide isomerase family. Monomer; predominantly as monomer under reducing conditions. Homodimer; disulfide-linked. Part of a large chaperone multiprotein complex comprising DNAJB11, HSP90B1, HSPA5, HYOU, PDIA2, PDIA4, PDIA6, PPIB, SDF2L1, UGGT1 and very small amounts of ERP29, but not, or at very low levels, CALR nor CANX. In terms of processing, the disulfide-linked homodimer exhibits an enhanced chaperone activity. Glycosylated.

Its subcellular location is the endoplasmic reticulum lumen. The catalysed reaction is Catalyzes the rearrangement of -S-S- bonds in proteins.. In terms of biological role, acts as an intracellular estrogen-binding protein. May be involved in modulating cellular levels and biological functions of estrogens in the pancreas. May act as a chaperone that inhibits aggregation of misfolded proteins. The protein is Protein disulfide-isomerase A2 (PDIA2) of Pongo abelii (Sumatran orangutan).